We begin with the raw amino-acid sequence, 151 residues long: Phosphoribosyl-AMP cyclohydrolase (151 aa).

The segment covering 1–13 has biased composition (polar residues); sequence MMTLTFASPPQNK. A disordered region spans residues 1–20; sequence MMTLTFASPPQNKSDLETGP. Asp93 contributes to the Mg(2+) binding site. Cys94 is a binding site for Zn(2+). Residues Asp95 and Asp97 each contribute to the Mg(2+) site. Residues Cys112 and Cys119 each contribute to the Zn(2+) site.

Belongs to the PRA-CH family. Homodimer. Mg(2+) is required as a cofactor. Requires Zn(2+) as cofactor.

It is found in the cytoplasm. The enzyme catalyses 1-(5-phospho-beta-D-ribosyl)-5'-AMP + H2O = 1-(5-phospho-beta-D-ribosyl)-5-[(5-phospho-beta-D-ribosylamino)methylideneamino]imidazole-4-carboxamide. It functions in the pathway amino-acid biosynthesis; L-histidine biosynthesis; L-histidine from 5-phospho-alpha-D-ribose 1-diphosphate: step 3/9. Functionally, catalyzes the hydrolysis of the adenine ring of phosphoribosyl-AMP. The chain is Phosphoribosyl-AMP cyclohydrolase from Sinorhizobium medicae (strain WSM419) (Ensifer medicae).